Reading from the N-terminus, the 116-residue chain is Large ribosomal subunit protein bL20 (116 aa).

This sequence belongs to the bacterial ribosomal protein bL20 family.

Its function is as follows. Binds directly to 23S ribosomal RNA and is necessary for the in vitro assembly process of the 50S ribosomal subunit. It is not involved in the protein synthesizing functions of that subunit. In Mycoplasmopsis fermentans (Mycoplasma fermentans), this protein is Large ribosomal subunit protein bL20 (rplT).